Consider the following 449-residue polypeptide: MKKGLTLDLSKTQAFVKDYELDYMEGMVKDSHDRLHSKTGQGNDFLGWIDLPVDYDKEEFARIKKAAEKIQSDSDVLVVIGIGGSYLGARAAIEMLTSNFHNVLDDNKRKVPKIFYAGNNISSTYMAELLEAIDGKDVSVNVISKSGTTTEPAIAFRIFKSYLEKKYGVEEARKRIYATTDKSRGALKSLADAEGYETFVIPDDVGGRFTVLTPVGLLPIAVAGINIDEMMQGAADARESYSNPSLKENDCYKYAVTRNALYNKGKEIEVLVNYEPCIHYFNEWWKQLYGESEGKDKKGLFPAAVDFSTDLHSMGQYIQDGRRNLFETVINVEKARKEITIEFSEGDLDGLNFLTGKTMDFVNNKAFQGTLLAHNDGEVPNMVLNVPELSPYYFGHMVYFFEKACGISGYLLGINPFDQPGVEAYKKNMFALLGKPGYEDMKDELEKRL.

Glu291 acts as the Proton donor in catalysis. Residues His312 and Lys426 contribute to the active site.

It belongs to the GPI family.

The protein resides in the cytoplasm. The enzyme catalyses alpha-D-glucose 6-phosphate = beta-D-fructose 6-phosphate. It participates in carbohydrate biosynthesis; gluconeogenesis. It functions in the pathway carbohydrate degradation; glycolysis; D-glyceraldehyde 3-phosphate and glycerone phosphate from D-glucose: step 2/4. In terms of biological role, catalyzes the reversible isomerization of glucose-6-phosphate to fructose-6-phosphate. The sequence is that of Glucose-6-phosphate isomerase from Clostridium botulinum (strain Alaska E43 / Type E3).